We begin with the raw amino-acid sequence, 572 residues long: Hemagglutinin-neuraminidase (572 aa).

At 1-31 the chain is on the intravirion side; it reads MEYWKHTNHGKDACNELGTSMATHGNKITNK. Residues 32 to 52 form a helical membrane-spanning segment; the sequence is ITYILWTIILVLLSIIFIIVL. Residues 53 to 572 lie on the Virion surface side of the membrane; the sequence is INSIKSEKAH…FKTEIPKSCS (520 aa). 2 disulfides stabilise this stretch: cysteine 190/cysteine 214 and cysteine 256/cysteine 269. The interval 252-257 is involved in neuraminidase activity; sequence NRKSCS. 2 N-linked (GlcNAc...) asparagine; by host glycosylation sites follow: asparagine 308 and asparagine 351. Cystine bridges form between cysteine 355–cysteine 469 and cysteine 463–cysteine 473. Residue asparagine 523 is glycosylated (N-linked (GlcNAc...) asparagine; by host). Cysteine 535 and cysteine 544 form a disulfide bridge.

This sequence belongs to the paramyxoviruses hemagglutinin-neuraminidase family. Homotetramer; composed of disulfide-linked homodimers. Interacts with F protein trimer.

It localises to the virion membrane. The protein localises to the host cell membrane. The enzyme catalyses Hydrolysis of alpha-(2-&gt;3)-, alpha-(2-&gt;6)-, alpha-(2-&gt;8)- glycosidic linkages of terminal sialic acid residues in oligosaccharides, glycoproteins, glycolipids, colominic acid and synthetic substrates.. Attaches the virus to sialic acid-containing cell receptors and thereby initiating infection. Binding of HN protein to the receptor induces a conformational change that allows the F protein to trigger virion/cell membranes fusion. Its function is as follows. Neuraminidase activity ensures the efficient spread of the virus by dissociating the mature virions from the neuraminic acid containing glycoproteins. This Homo sapiens (Human) protein is Hemagglutinin-neuraminidase (HN).